Consider the following 142-residue polypeptide: Hemoglobin F-I (142 aa).

The Globin domain maps to 2–142 (GLTTAQIKAI…AAGVLVAAMK (141 aa)). His95 is a binding site for heme b.

This sequence belongs to the globin family. In terms of assembly, homotetramer.

Its function is as follows. Hemoglobin F-I appears to function in storage, rather than transport of oxygen. This Urechis caupo (Innkeeper worm) protein is Hemoglobin F-I.